Reading from the N-terminus, the 205-residue chain is Tegument protein UL51 homolog (205 aa).

Cysteine 4 carries S-palmitoyl cysteine; by host lipidation.

It belongs to the herpesviridae UL51 family. Oligomerizes. Interacts with U75; this interaction mediates U75 incorporation to virions. Post-translationally, phosphorylated. Palmitoylation is necessary for Golgi localization.

Its subcellular location is the virion tegument. The protein localises to the host cytoplasm. The protein resides in the host Golgi apparatus. Functionally, plays several roles during the time course of infection, including egress of virus particles from the perinuclear space and secondary envelopment of cytoplasmic capsids that bud into specific trans-Golgi network (TGN)-derived membranes. This Homo sapiens (Human) protein is Tegument protein UL51 homolog (U44).